Reading from the N-terminus, the 745-residue chain is Multiple C2 domain and transmembrane region protein 13 (745 aa).

The disordered stretch occupies residues 1–30; it reads MAANKDEFSVKQISPKLGGERGARNPYGPT. 3 consecutive C2 domains span residues 21–139, 171–293, and 326–453; these read RGAR…PQRY, DASE…SAPA, and AEES…ACSY. 4 residues coordinate Ca(2+): aspartate 56, aspartate 61, aspartate 106, and asparagine 110. The next 2 helical transmembrane spans lie at 568–588 and 688–708; these read SLIVWLAIYLVVVPCIVLVGL and FYCWLICVLVALCWYNIPMWL.

This sequence belongs to the MCTP family. It depends on Ca(2+) as a cofactor. In terms of tissue distribution, expressed in incipient leaf primordia.

It localises to the cell membrane. The protein resides in the cytoplasm. May function as a signaling molecule by regulating the trafficking of other regulators. This is Multiple C2 domain and transmembrane region protein 13 from Arabidopsis thaliana (Mouse-ear cress).